The sequence spans 347 residues: Probable magnetosome protein Mms36 (347 aa).

The helical transmembrane segment at 25 to 45 (VLVLYLAIAVVVAVLAWPWLA) threads the bilayer.

It localises to the magnetosome membrane. In terms of biological role, the 4 genes of this operon collectively influence magnetosome size and number. The chain is Probable magnetosome protein Mms36 from Magnetospirillum gryphiswaldense (strain DSM 6361 / JCM 21280 / NBRC 15271 / MSR-1).